A 164-amino-acid polypeptide reads, in one-letter code: PTS system sorbose-specific EIIB component (164 aa).

Residues methionine 1 to glutamate 164 form the PTS EIIB type-4 domain. Residue histidine 14 is the Pros-phosphohistidine intermediate of the active site. Histidine 14 is modified (phosphohistidine; by EIIA).

The protein localises to the cytoplasm. The enzyme catalyses keto-L-sorbose(out) + N(pros)-phospho-L-histidyl-[protein] = L-sorbose 1-phosphate(in) + L-histidyl-[protein]. Its function is as follows. The phosphoenolpyruvate-dependent sugar phosphotransferase system (PTS), a major carbohydrate active transport system, catalyzes the phosphorylation of incoming sugar substrates concomitant with their translocation across the cell membrane. The enzyme II SorABCD PTS system is involved in L-sorbose transport. The polypeptide is PTS system sorbose-specific EIIB component (Lacticaseibacillus casei (Lactobacillus casei)).